The sequence spans 449 residues: Probable pectate lyase P59 (449 aa).

The first 22 residues, 1–22, serve as a signal peptide directing secretion; that stretch reads MGGPKIKYSFLFLCITFATIIP. 3 N-linked (GlcNAc...) asparagine glycosylation sites follow: Asn-56, Asn-80, and Asn-81. The Ca(2+) site is built by Asp-245, Asp-269, and Asp-273. Arg-325 is an active-site residue.

Belongs to the polysaccharide lyase 1 family. Ca(2+) serves as cofactor. As to expression, expressed in anthers and pollen.

The enzyme catalyses Eliminative cleavage of (1-&gt;4)-alpha-D-galacturonan to give oligosaccharides with 4-deoxy-alpha-D-galact-4-enuronosyl groups at their non-reducing ends.. It participates in glycan metabolism; pectin degradation; 2-dehydro-3-deoxy-D-gluconate from pectin: step 2/5. Might be needed during pollen development and tube growth. The sequence is that of Probable pectate lyase P59 (LAT59) from Solanum lycopersicum (Tomato).